Consider the following 463-residue polypeptide: 4-hydroxybenzoate polyprenyltransferase, mitochondrial (463 aa).

Disordered stretches follow at residues 28-48 (NNNTNNNNNNNGINKYNSTFN) and 133-152 (LLDDNNSNSNNNNNSNNNKP). Residues 137–150 (NNSNSNNNNNSNNN) are compositionally biased toward low complexity. Helical transmembrane passes span 181–201 (IGVWLLLYPCCWSISLAAPAG), 206–226 (LKTMLVFGIGAYVMRSAGCVI), 257–277 (LIFLGGQLLASFGLILSSLNY), 305–325 (FVLGLAFNWGALAGYSAIAGS), 330–350 (IVAPLYLAGISWTMVYDTIYA), 375–395 (IILSVFSGLVISGMFLTGIAA), and 431–451 (FISNKNFGLYFLLIIIVSKLL).

The protein belongs to the UbiA prenyltransferase family. Requires Mg(2+) as cofactor.

The protein localises to the mitochondrion inner membrane. It carries out the reaction an all-trans-polyprenyl diphosphate + 4-hydroxybenzoate = a 4-hydroxy-3-(all-trans-polyprenyl)benzoate + diphosphate. It participates in cofactor biosynthesis; ubiquinone biosynthesis. Catalyzes the prenylation of para-hydroxybenzoate (PHB) with an all-trans polyprenyl group. Mediates the second step in the final reaction sequence of coenzyme Q (CoQ) biosynthesis, which is the condensation of the polyisoprenoid side chain with PHB. Functionally, catalyzes the prenylation of para-hydroxybenzoate (PHB) with an all-trans polyprenyl group. Mediates the second step in the final reaction sequence of coenzyme Q (CoQ) biosynthesis, which is the condensation of the polyisoprenoid side chain with PHB, generating the first membrane-bound Q intermediate. In Dictyostelium discoideum (Social amoeba), this protein is 4-hydroxybenzoate polyprenyltransferase, mitochondrial.